Consider the following 297-residue polypeptide: Taste receptor type 2 member 4 (297 aa).

The Extracellular portion of the chain corresponds to 1 to 11 (MLWELYVFVFA). A helical transmembrane segment spans residues 12–32 (ASVFLNFVGIIANLFIIVIII). Topologically, residues 33–46 (KTWVNSRRIASPDR) are cytoplasmic. The helical transmembrane segment at 47 to 67 (ILFSLAITRFLTLGLFLLNSV) threads the bilayer. Over 68–80 (YIATNTGRSVYFS) the chain is Extracellular. The helical transmembrane segment at 81–101 (TFFLLCWKFLDANSLWLVTIL) threads the bilayer. At 102 to 128 (NSLYCVKITNFQHPVFLLLKRTISMKT) the chain is on the cytoplasmic side. The helical transmembrane segment at 129–149 (TSLLLACLLISALTTLLYYML) threads the bilayer. Over 150–171 (SQISRFPEHIIGRNDTSFDLSD) the chain is Extracellular. N-linked (GlcNAc...) asparagine glycosylation occurs at asparagine 163. The chain crosses the membrane as a helical span at residues 172–192 (GILTLVASLVLNSLLQFMLNV). Residues 193–229 (TFASLLIHSLRRHIQKMQRNRTSFWNPQTEAHMGAMR) are Cytoplasmic-facing. A helical membrane pass occupies residues 230 to 250 (LMICFLVLYIPYSIATLLYLP). Topologically, residues 251–260 (SYMRKNLRAQ) are extracellular. The chain crosses the membrane as a helical span at residues 261–281 (AICMIITAAYPPGHSVLLIIT). Topologically, residues 282–297 (HHKLKAKAKKIFCFYK) are cytoplasmic.

The protein belongs to the G-protein coupled receptor T2R family. Expressed in subsets of taste receptor cells of the tongue and palate epithelium and exclusively in gustducin-positive cells. Expressed in 15% taste bud cells in circumvallate and foliate papillae but only in 2% in fungiform papillae.

It is found in the membrane. Its subcellular location is the cell projection. It localises to the cilium membrane. Gustducin-coupled receptor for denatonium and N(6)-propyl-2-thiouracil implicated in the perception of bitter compounds in the oral cavity and the gastrointestinal tract. Signals through PLCB2 and the calcium-regulated cation channel TRPM5. In airway epithelial cells, binding of denatonium increases the intracellular calcium ion concentration and stimulates ciliary beat frequency. The protein is Taste receptor type 2 member 4 (Tas2r4) of Mus musculus (Mouse).